Here is a 794-residue protein sequence, read N- to C-terminus: Cilia- and flagella-associated protein 184 (794 aa).

Disordered stretches follow at residues 1–105 (MASE…VNSE) and 386–458 (AHEE…QQDT). Low complexity predominate over residues 24–35 (QMQQYMMEMQRQ). Acidic residues predominate over residues 49-69 (EGYEEGQEGEGYGEEYGDQDY). Composition is skewed to basic and acidic residues over residues 89-103 (QVNEMHQDRYDRRVN), 386-411 (AHEEQERKEREENDAKRLKQSRKDYG), and 431-445 (ISDKDKHHDSMHAEQ). A compositionally biased stretch (low complexity) spans 446–456 (EQNQQAAQQQQ). Coiled coils occupy residues 461 to 613 (NKEI…LRLR) and 638 to 775 (FEQL…ANQI). Residues 774 to 787 (QISTQNMQSQNNSL) are compositionally biased toward polar residues. The segment at 774-794 (QISTQNMQSQNNSLKKPYQPY) is disordered.

This sequence belongs to the CFAP184 family. As to quaternary structure, forms a complex with CFAP263; the interaction is required for functional activity in cilia.

It is found in the cell projection. The protein localises to the cilium. In terms of biological role, in complex with CFAP263, acts as a regulator of ciliary beating that connects radial spoke 3 (RS3) to the inner dynein arm (IDA) and the nexin-dynein regulatory complex (N-DRC). The complex is positioned parallel to N-DRC and forms a connection between the arch at the base of RS3, the IDA tail and N-DRC. The chain is Cilia- and flagella-associated protein 184 (CFAP184) from Tetrahymena thermophila (strain SB210).